A 158-amino-acid polypeptide reads, in one-letter code: Na(+)/H(+) antiporter subunit E (158 aa).

2 consecutive transmembrane segments (helical) span residues 21–41 (SPSAAGFITGYILGMLSLFFF) and 51–71 (LWKLISIIKLCFIFIKELYLA).

It belongs to the CPA3 antiporters (TC 2.A.63) subunit E family. In terms of assembly, forms a heterooligomeric complex that consists of seven subunits: MrpA, MrpB, MrpC, MrpD, MrpE, MrpF and MrpG.

It localises to the cell membrane. Its function is as follows. Mrp complex is a Na(+)/H(+) antiporter that is considered to be the major Na(+) excretion system in B.subtilis. Has a major role in Na(+) resistance and a minor role in Na(+)- and K(+)-dependent pH homeostasis as compared to TetB. MrpA may be the actual Na(+)/H(+) antiporter, although the six other Mrp proteins are all required for Na(+)/H(+) antiport activity and Na(+) resistance. MrpA is required for initiation of sporulation when external Na(+) concentration increases. Also transports Li(+) but not K(+), Ca(2+) or Mg(2+). This chain is Na(+)/H(+) antiporter subunit E (mrpE), found in Bacillus subtilis (strain 168).